Consider the following 100-residue polypeptide: Small ribosomal subunit protein uS14c (100 aa).

This sequence belongs to the universal ribosomal protein uS14 family. Part of the 30S ribosomal subunit.

The protein resides in the plastid. It is found in the chloroplast. In terms of biological role, binds 16S rRNA, required for the assembly of 30S particles. In Cyanidium caldarium (Red alga), this protein is Small ribosomal subunit protein uS14c.